The chain runs to 335 residues: Nucleotide-binding protein CYA_0911 (335 aa).

Position 20–27 (G20–T27) interacts with ATP. The segment at A306 to D335 is disordered.

The protein belongs to the RapZ-like family.

In terms of biological role, displays ATPase and GTPase activities. This is Nucleotide-binding protein CYA_0911 from Synechococcus sp. (strain JA-3-3Ab) (Cyanobacteria bacterium Yellowstone A-Prime).